The primary structure comprises 386 residues: S-adenosylmethionine synthase (386 aa).

Residue histidine 16 coordinates ATP. Aspartate 18 contributes to the Mg(2+) binding site. Glutamate 44 is a binding site for K(+). Residues glutamate 57 and glutamine 100 each contribute to the L-methionine site. The interval 100–110 is flexible loop; it reads QSGDIAMGVDE. ATP-binding positions include 165–167, aspartate 240, 246–247, alanine 263, and lysine 267; these read DAK and RK. Aspartate 240 serves as a coordination point for L-methionine. Lysine 271 lines the L-methionine pocket.

It belongs to the AdoMet synthase family. As to quaternary structure, homotetramer; dimer of dimers. Mg(2+) is required as a cofactor. Requires K(+) as cofactor.

It localises to the cytoplasm. It carries out the reaction L-methionine + ATP + H2O = S-adenosyl-L-methionine + phosphate + diphosphate. It participates in amino-acid biosynthesis; S-adenosyl-L-methionine biosynthesis; S-adenosyl-L-methionine from L-methionine: step 1/1. In terms of biological role, catalyzes the formation of S-adenosylmethionine (AdoMet) from methionine and ATP. The overall synthetic reaction is composed of two sequential steps, AdoMet formation and the subsequent tripolyphosphate hydrolysis which occurs prior to release of AdoMet from the enzyme. This Hahella chejuensis (strain KCTC 2396) protein is S-adenosylmethionine synthase.